A 370-amino-acid polypeptide reads, in one-letter code: Quinolinate synthase (370 aa).

2 residues coordinate iminosuccinate: histidine 62 and serine 83. Cysteine 128 contributes to the [4Fe-4S] cluster binding site. Iminosuccinate is bound by residues 154–156 and serine 171; that span reads YAN. Position 215 (cysteine 215) interacts with [4Fe-4S] cluster. Iminosuccinate contacts are provided by residues 241–243 and threonine 258; that span reads HPE. Residue cysteine 312 participates in [4Fe-4S] cluster binding.

The protein belongs to the quinolinate synthase family. Type 1 subfamily. It depends on [4Fe-4S] cluster as a cofactor.

It localises to the cytoplasm. It catalyses the reaction iminosuccinate + dihydroxyacetone phosphate = quinolinate + phosphate + 2 H2O + H(+). It functions in the pathway cofactor biosynthesis; NAD(+) biosynthesis; quinolinate from iminoaspartate: step 1/1. In terms of biological role, catalyzes the condensation of iminoaspartate with dihydroxyacetone phosphate to form quinolinate. The polypeptide is Quinolinate synthase (Neisseria gonorrhoeae (strain ATCC 700825 / FA 1090)).